Consider the following 325-residue polypeptide: HTH-type transcriptional regulator BbuR (325 aa).

The 58-residue stretch at 15 to 72 (LDTDLLNVFCWVAKTQSFSRAAAELGTSQPVITRKIGRLEECLGVALFVRSNRGCVLT) folds into the HTH lysR-type domain. Residues 32–51 (FSRAAAELGTSQPVITRKIG) constitute a DNA-binding region (H-T-H motif).

The protein belongs to the LysR transcriptional regulatory family.

The protein is HTH-type transcriptional regulator BbuR (bbuR) of Bordetella bronchiseptica (strain ATCC BAA-588 / NCTC 13252 / RB50) (Alcaligenes bronchisepticus).